The following is a 310-amino-acid chain: Vomeronasal type-1 receptor 47 (310 aa).

The Extracellular segment spans residues 1–16 (MNENSRLHTHSNIRNT). The helical transmembrane segment at 17–37 (FFSEIGIGISGNSFLLLFHII) threads the bilayer. Over 38–49 (KFFRGHRPRLTD) the chain is Cytoplasmic. A helical transmembrane segment spans residues 50-70 (LPIGLLSLIHLLMLLVAAVIA). Over 71–91 (TDIFISWRGWNDIICKFLVYL) the chain is Extracellular. Cys85 and Cys172 are disulfide-bonded. A helical membrane pass occupies residues 92–114 (YRSLRGLSLCTTSMLSVLQAIIL). The Cytoplasmic segment spans residues 115-131 (SPRSYCLAKFKRKSSHN). A helical membrane pass occupies residues 132 to 152 (ISCAIIFLSVLYMSISSHLFI). Residues 153–193 (SITATLNLTMNNFLYVSQSCSLLPLSYLMQSMYSTLLVLRE) are Extracellular-facing. Asn159 carries an N-linked (GlcNAc...) asparagine glycan. A helical membrane pass occupies residues 194–214 (VFLIGLMVLSTSYMVALLCMH). The Cytoplasmic portion of the chain corresponds to 215–238 (RKQAQNLQGTSLSLKTAPEQRATQ). The chain crosses the membrane as a helical span at residues 239–259 (TILMLMTFFVLMSIFDSIVSS). Residues 260–269 (SRAMFLDDST) are Extracellular-facing. The chain crosses the membrane as a helical span at residues 270–290 (CYSIYIFVMHIYATVSPFVFM). Residues 291-310 (STEKHLVNFFRSMCEWIINM) lie on the Cytoplasmic side of the membrane.

The protein belongs to the G-protein coupled receptor 1 family.

The protein resides in the cell membrane. Its function is as follows. Putative pheromone receptor implicated in the regulation of social and reproductive behavior. The protein is Vomeronasal type-1 receptor 47 (Vmn1r47) of Mus musculus (Mouse).